Here is a 406-residue protein sequence, read N- to C-terminus: Tryptophan synthase beta chain (406 aa).

K97 bears the N6-(pyridoxal phosphate)lysine mark.

It belongs to the TrpB family. As to quaternary structure, tetramer of two alpha and two beta chains. Pyridoxal 5'-phosphate is required as a cofactor.

The enzyme catalyses (1S,2R)-1-C-(indol-3-yl)glycerol 3-phosphate + L-serine = D-glyceraldehyde 3-phosphate + L-tryptophan + H2O. It functions in the pathway amino-acid biosynthesis; L-tryptophan biosynthesis; L-tryptophan from chorismate: step 5/5. Functionally, the beta subunit is responsible for the synthesis of L-tryptophan from indole and L-serine. The chain is Tryptophan synthase beta chain from Lacticaseibacillus paracasei (strain ATCC 334 / BCRC 17002 / CCUG 31169 / CIP 107868 / KCTC 3260 / NRRL B-441) (Lactobacillus paracasei).